Consider the following 218-residue polypeptide: Large ribosomal subunit protein uL4 (218 aa).

A disordered region spans residues 54–106 (GTHAVKNRGAVSGGGRKPWKQKGTGRARQGSIRAPQWYHGGVAHGPVPRDYSQ).

This sequence belongs to the universal ribosomal protein uL4 family. As to quaternary structure, part of the 50S ribosomal subunit.

Functionally, one of the primary rRNA binding proteins, this protein initially binds near the 5'-end of the 23S rRNA. It is important during the early stages of 50S assembly. It makes multiple contacts with different domains of the 23S rRNA in the assembled 50S subunit and ribosome. In terms of biological role, forms part of the polypeptide exit tunnel. The protein is Large ribosomal subunit protein uL4 of Bifidobacterium animalis subsp. lactis (strain AD011).